The sequence spans 407 residues: Imidazolonepropionase (407 aa).

His-68 and His-70 together coordinate Fe(3+). Zn(2+) contacts are provided by His-68 and His-70. Positions 77, 140, and 173 each coordinate 4-imidazolone-5-propanoate. Position 140 (Tyr-140) interacts with N-formimidoyl-L-glutamate. His-238 is a Fe(3+) binding site. Residue His-238 coordinates Zn(2+). Gln-241 contacts 4-imidazolone-5-propanoate. Asp-313 lines the Fe(3+) pocket. Asp-313 contributes to the Zn(2+) binding site. The N-formimidoyl-L-glutamate site is built by Asn-315 and Gly-317. Thr-318 is a 4-imidazolone-5-propanoate binding site.

The protein belongs to the metallo-dependent hydrolases superfamily. HutI family. It depends on Zn(2+) as a cofactor. Requires Fe(3+) as cofactor.

It localises to the cytoplasm. The enzyme catalyses 4-imidazolone-5-propanoate + H2O = N-formimidoyl-L-glutamate. It functions in the pathway amino-acid degradation; L-histidine degradation into L-glutamate; N-formimidoyl-L-glutamate from L-histidine: step 3/3. Its function is as follows. Catalyzes the hydrolytic cleavage of the carbon-nitrogen bond in imidazolone-5-propanoate to yield N-formimidoyl-L-glutamate. It is the third step in the universal histidine degradation pathway. This Burkholderia mallei (strain ATCC 23344) protein is Imidazolonepropionase.